A 1072-amino-acid chain; its full sequence is Integrator complex subunit 3 homolog (1072 aa).

Disordered regions lie at residues 920–941 (YPSS…STSI) and 1002–1072 (DTTV…NDSD). 4 positions are modified to phosphoserine: Ser1042, Ser1043, Ser1047, and Ser1048.

It belongs to the Integrator subunit 3 family. In terms of assembly, belongs to the multiprotein complex Integrator, at least composed of IntS1, IntS2, IntS3, IntS4, omd/IntS5, IntS6, defl/IntS7, IntS8, IntS9, IntS10, IntS11, IntS12, asun/IntS13, IntS14 and IntS15. The core complex associates with protein phosphatase 2A subunits mts/PP2A and Pp2A-29B, to form the Integrator-PP2A (INTAC) complex.

Its subcellular location is the nucleus. The protein resides in the cytoplasm. Its function is as follows. Component of the integrator complex, a multiprotein complex that terminates RNA polymerase II (Pol II) transcription in the promoter-proximal region of genes. The integrator complex provides a quality checkpoint during transcription elongation by driving premature transcription termination of transcripts that are unfavorably configured for transcriptional elongation: the complex terminates transcription by (1) catalyzing dephosphorylation of the C-terminal domain (CTD) of Pol II subunit Polr2A/Rbp1 and Spt5, and (2) degrading the exiting nascent RNA transcript via endonuclease activity. The integrator complex is also involved in the 3'-end processing of the U7 snRNA, and also the spliceosomal snRNAs U1, U2, U4 and U5. This Drosophila erecta (Fruit fly) protein is Integrator complex subunit 3 homolog (IntS3).